Consider the following 586-residue polypeptide: Lamin-B1 (586 aa).

Positions 1–31 (MATATPVPPRMGSRAGGPTTPLSPTRLSRLQ) are disordered. Alanine 2 is modified (N-acetylalanine). Positions 2-34 (ATATPVPPRMGSRAGGPTTPLSPTRLSRLQEKE) are head. Phosphothreonine occurs at positions 3 and 5. Position 14 is an omega-N-methylarginine (arginine 14). Threonine 20 carries the phosphothreonine modification. At serine 23 the chain carries Phosphoserine. Phosphothreonine is present on threonine 25. Position 28 is a phosphoserine (serine 28). Residues 32–388 (EKEELRELND…KLLEGEEERL (357 aa)) enclose the IF rod domain. The segment at 35–69 (ELRELNDRLAVYIDKVRSLETENSALQLQVTEREE) is coil 1A. Positions 70–81 (VRGRELTGLKAL) are linker 1. Positions 82–215 (YETELADARR…EFRKSMYEEE (134 aa)) are coil 1B. Lysine 102 participates in a covalent cross-link: Glycyl lysine isopeptide (Lys-Gly) (interchain with G-Cter in SUMO2). At lysine 111 the chain carries N6-acetyllysine. Lysine 123 is covalently cross-linked (Glycyl lysine isopeptide (Lys-Gly) (interchain with G-Cter in SUMO2)). Residue serine 126 is modified to Phosphoserine. A Glycyl lysine isopeptide (Lys-Gly) (interchain with G-Cter in SUMO2) cross-link involves residue lysine 145. Residue lysine 157 is modified to N6-acetyllysine; alternate. Residue lysine 157 forms a Glycyl lysine isopeptide (Lys-Gly) (interchain with G-Cter in SUMO2); alternate linkage. Phosphoserine is present on serine 158. A Glycyl lysine isopeptide (Lys-Gly) (interchain with G-Cter in SUMO2) cross-link involves residue lysine 181. Residues serine 200, serine 210, and serine 232 each carry the phosphoserine modification. Positions 216–243 (INETRRKHETRLVEVDSGRQIEYEYKLA) are linker 2. Residues lysine 241 and lysine 261 each participate in a glycyl lysine isopeptide (Lys-Gly) (interchain with G-Cter in SUMO2) cross-link. Residues 244–386 (QALHEMREQH…YRKLLEGEEE (143 aa)) are coil 2. Lysine 271 carries the N6-acetyllysine; alternate modification. A Glycyl lysine isopeptide (Lys-Gly) (interchain with G-Cter in SUMO2); alternate cross-link involves residue lysine 271. Residues serine 278 and serine 302 each carry the phosphoserine modification. Residue lysine 312 forms a Glycyl lysine isopeptide (Lys-Gly) (interchain with G-Cter in SUMO2) linkage. Lysine 330 carries the N6-acetyllysine; alternate modification. Lysine 330 is covalently cross-linked (Glycyl lysine isopeptide (Lys-Gly) (interchain with G-Cter in SUMO2); alternate). Phosphoserine occurs at positions 375 and 393. Positions 387-586 (RLKLSPSPSS…RASNRSCAIM (200 aa)) are tail. The interval 388–432 (LKLSPSPSSRVTVSRASSSRSVRTTRGKRKRVDVEESEASSSVSI) is disordered. Over residues 390 to 409 (LSPSPSSRVTVSRASSSRSV) the composition is skewed to low complexity. The O-linked (GlcNAc) threonine glycan is linked to threonine 399. Arginine 413 carries the post-translational modification Omega-N-methylarginine. The Nuclear localization signal signature appears at 415-420 (KRKRVD). The 117-residue stretch at 430–546 (VSISHSASAT…EEVAQRSTVF (117 aa)) folds into the LTD domain. Lysine 483 carries the N6-acetyllysine modification. A Glycyl lysine isopeptide (Lys-Gly) (interchain with G-Cter in SUMO2) cross-link involves residue lysine 532. Phosphoserine is present on serine 534. A Glycyl lysine isopeptide (Lys-Gly) (interchain with G-Cter in SUMO2) cross-link involves residue lysine 547. Residue threonine 575 is modified to Phosphothreonine. Cysteine 583 is subject to Cysteine methyl ester. Cysteine 583 carries the S-farnesyl cysteine lipid modification. Positions 584 to 586 (AIM) are cleaved as a propeptide — removed in mature form.

This sequence belongs to the intermediate filament family. As to quaternary structure, homodimer. Lamin dimers then assemble into dimeric head-to-tail polymers. Ultimately, two head-to-tail polymers assemble laterally into a protofilament with a uniformly shaped rod of 3.5 nm in diameter. Interacts with SPAG4 and SEPT12. Post-translationally, B-type lamins undergo a series of modifications, such as farnesylation and phosphorylation. Increased phosphorylation of the lamins occurs before envelope disintegration and probably plays a role in regulating lamin associations. In terms of processing, phosphorylation plays a key role in lamin organization, subcellular localization and nuclear envelope disintegration. Phosphorylation by CDK1 at Ser-23 and Ser-393 at the onset of mitosis drives lamin disassembly and nuclear envelope breakdown.

The protein resides in the nucleus lamina. Functionally, lamins are intermediate filament proteins that assemble into a filamentous meshwork, and which constitute the major components of the nuclear lamina, a fibrous layer on the nucleoplasmic side of the inner nuclear membrane. Lamins provide a framework for the nuclear envelope, bridging the nuclear envelope and chromatin, thereby playing an important role in nuclear assembly, chromatin organization, nuclear membrane and telomere dynamics. The structural integrity of the lamina is strictly controlled by the cell cycle, as seen by the disintegration and formation of the nuclear envelope in prophase and telophase, respectively. The polypeptide is Lamin-B1 (LMNB1) (Homo sapiens (Human)).